Reading from the N-terminus, the 362-residue chain is Heat-inducible transcription repressor HrcA (362 aa).

The protein belongs to the HrcA family.

In terms of biological role, negative regulator of class I heat shock genes (grpE-dnaK-dnaJ and groELS operons). Prevents heat-shock induction of these operons. The sequence is that of Heat-inducible transcription repressor HrcA from Bradyrhizobium sp. (strain BTAi1 / ATCC BAA-1182).